Here is a 341-residue protein sequence, read N- to C-terminus: Alpha-ketoglutarate-dependent dioxygenase oryG (341 aa).

Residue histidine 100 coordinates substrate. Fe cation contacts are provided by histidine 140 and aspartate 142. Threonine 167 contacts 2-oxoglutarate. Histidine 299 is a binding site for Fe cation. 2 residues coordinate 2-oxoglutarate: arginine 311 and arginine 315. Residue arginine 315 coordinates substrate.

This sequence belongs to the TfdA dioxygenase family. Fe(2+) serves as cofactor.

The protein operates within secondary metabolite biosynthesis. Alpha-ketoglutarate-dependent dioxygenase; part of the gene cluster that mediates the biosynthesis of oryzines, natural products with an unusual maleidride backbone. The two subunits of the fungal fatty acid synthase oryfasA and oryfasB probably form octenoic acid. This fatty acid is most likely activated by the acyl-CoA ligase oryP to give octenyl-CoA before the citrate synthase-like protein oryE catalyzes condensation with oxaloacetate to form tricarboxylic acid. The next steps of the pathways are conjectural, but a favorite possible route has been proposed, beginning with decarboxylation and concomitant dehydration by the decarboxylase oryM, followed by tautomerization, which may lead to the production of a diene intermediate. Reduction of this diene intermediate could give the known metabolite piliformic acid. On the pathway to oryzine B and oryzine A, however, hydroxylation of the diene by the alpha-ketoglutarate-dependent dioxygenase oryG and lactonisation by the lactonohydrolases oryH or oryL could give oryzine B directly. Finally, enoyl reduction by the dehydrogenase oryD would then convert oryzine B into oryzine A. In Aspergillus oryzae (strain ATCC 42149 / RIB 40) (Yellow koji mold), this protein is Alpha-ketoglutarate-dependent dioxygenase oryG.